Reading from the N-terminus, the 275-residue chain is Homeobox protein Hox-C12a (275 aa).

Disordered stretches follow at residues 101-129 (SREN…DHGM) and 148-213 (QLTQ…KRKP). Low complexity predominate over residues 155 to 177 (SCQSMESDSSSSLLNEASKPSSS). Residues 178-194 (DTQTLVSPGSHTGTITA) are compositionally biased toward polar residues. A DNA-binding region (homeobox) is located at residues 207–266 (TRKKRKPYSKLQLAELEGEFMMNEFITRQRRRELSDRLNLSDQQVKIWFQNRRMKKKRLM).

This sequence belongs to the Abd-B homeobox family.

It is found in the nucleus. Functionally, sequence-specific transcription factor which is part of a developmental regulatory system that provides cells with specific positional identities on the anterior-posterior axis. This is Homeobox protein Hox-C12a (hoxc12a) from Takifugu rubripes (Japanese pufferfish).